Reading from the N-terminus, the 197-residue chain is dITP/XTP pyrophosphatase (197 aa).

Residue 8-13 (TGNPGK) coordinates substrate. 2 residues coordinate Mg(2+): glutamate 40 and aspartate 69. Aspartate 69 serves as the catalytic Proton acceptor. Residues serine 70, 154-157 (FGYD), lysine 177, and 182-183 (HR) each bind substrate.

It belongs to the HAM1 NTPase family. In terms of assembly, homodimer. Mg(2+) serves as cofactor.

It catalyses the reaction XTP + H2O = XMP + diphosphate + H(+). The enzyme catalyses dITP + H2O = dIMP + diphosphate + H(+). The catalysed reaction is ITP + H2O = IMP + diphosphate + H(+). In terms of biological role, pyrophosphatase that catalyzes the hydrolysis of nucleoside triphosphates to their monophosphate derivatives, with a high preference for the non-canonical purine nucleotides XTP (xanthosine triphosphate), dITP (deoxyinosine triphosphate) and ITP. Seems to function as a house-cleaning enzyme that removes non-canonical purine nucleotides from the nucleotide pool, thus preventing their incorporation into DNA/RNA and avoiding chromosomal lesions. This chain is dITP/XTP pyrophosphatase, found in Pectobacterium atrosepticum (strain SCRI 1043 / ATCC BAA-672) (Erwinia carotovora subsp. atroseptica).